The chain runs to 243 residues: uncharacterized protein (243 aa).

Residues 1–16 (MKHFIILFLLLFVTAG) form the signal peptide. A lipid anchor (N-palmitoyl cysteine) is attached at Cys-17. Cys-17 carries S-diacylglycerol cysteine lipidation.

The protein localises to the cell membrane. This is an uncharacterized protein from Bacillus subtilis (strain 168).